The chain runs to 352 residues: Protein RecA (352 aa).

74-81 (GPESSGKT) lines the ATP pocket.

Belongs to the RecA family.

The protein localises to the cytoplasm. Functionally, can catalyze the hydrolysis of ATP in the presence of single-stranded DNA, the ATP-dependent uptake of single-stranded DNA by duplex DNA, and the ATP-dependent hybridization of homologous single-stranded DNAs. It interacts with LexA causing its activation and leading to its autocatalytic cleavage. The protein is Protein RecA of Ralstonia nicotianae (strain ATCC BAA-1114 / GMI1000) (Ralstonia solanacearum).